Reading from the N-terminus, the 108-residue chain is MPHESSPDSQHEHGVAVEAARPEVAPPPFYQVMLLNDDYTPMDFVVDVLQQFFSMDLDKATQVMLHVHTRGRGVCGVFTREVAETKVAQVNEYSRMNQHPLLCTMEKA.

Basic and acidic residues predominate over residues 1-15; that stretch reads MPHESSPDSQHEHGV. Residues 1-22 form a disordered region; sequence MPHESSPDSQHEHGVAVEAARP.

This sequence belongs to the ClpS family. In terms of assembly, binds to the N-terminal domain of the chaperone ClpA.

Its function is as follows. Involved in the modulation of the specificity of the ClpAP-mediated ATP-dependent protein degradation. This chain is ATP-dependent Clp protease adapter protein ClpS, found in Stenotrophomonas maltophilia (strain K279a).